We begin with the raw amino-acid sequence, 446 residues long: ATP synthase subunit b-delta (446 aa).

Positions 1-168 (MSTFIGQLFG…PATADVDYPL (168 aa)) are ATP synthase subunit b. A helical transmembrane segment spans residues 4–24 (FIGQLFGFAVIVYLVWRFIVP). The ATP synthase subunit delta stretch occupies residues 169–446 (LAKMRSASRR…LAAAEARLPD (278 aa)).

In the N-terminal section; belongs to the ATPase B chain family. The protein in the C-terminal section; belongs to the ATPase delta chain family. F-type ATPases have 2 components, F(1) - the catalytic core - and F(0) - the membrane proton channel. F(1) has five subunits: alpha(3), beta(3), gamma(1), delta(1), epsilon(1). F(0) has three main subunits: a(1), b(2) and c(10-14). The alpha and beta chains form an alternating ring which encloses part of the gamma chain. F(1) is attached to F(0) by a central stalk formed by the gamma and epsilon chains, while a peripheral stalk is formed by the delta and b chains.

It is found in the cell membrane. F(1)F(0) ATP synthase produces ATP from ADP in the presence of a proton or sodium gradient. F-type ATPases consist of two structural domains, F(1) containing the extramembraneous catalytic core and F(0) containing the membrane proton channel, linked together by a central stalk and a peripheral stalk. During catalysis, ATP synthesis in the catalytic domain of F(1) is coupled via a rotary mechanism of the central stalk subunits to proton translocation. Its function is as follows. This fusion protein includes a component of the F(0) channel (subunit b) and of the F(1) subunit (subunit delta). Two copies of subunit b and one of delta together form the peripheral 'stator' stalk which links F(1) to F(0). In Mycobacterium bovis (strain ATCC BAA-935 / AF2122/97), this protein is ATP synthase subunit b-delta (atpFH).